The sequence spans 177 residues: Adenine phosphoribosyltransferase (177 aa).

Belongs to the purine/pyrimidine phosphoribosyltransferase family. As to quaternary structure, homodimer.

It is found in the cytoplasm. The catalysed reaction is AMP + diphosphate = 5-phospho-alpha-D-ribose 1-diphosphate + adenine. It participates in purine metabolism; AMP biosynthesis via salvage pathway; AMP from adenine: step 1/1. Catalyzes a salvage reaction resulting in the formation of AMP, that is energically less costly than de novo synthesis. In Leuconostoc citreum (strain KM20), this protein is Adenine phosphoribosyltransferase.